A 250-amino-acid polypeptide reads, in one-letter code: Cell division protein ZapD (250 aa).

Belongs to the ZapD family. Interacts with FtsZ.

The protein resides in the cytoplasm. Its function is as follows. Cell division factor that enhances FtsZ-ring assembly. Directly interacts with FtsZ and promotes bundling of FtsZ protofilaments, with a reduction in FtsZ GTPase activity. The polypeptide is Cell division protein ZapD (Yersinia enterocolitica serotype O:8 / biotype 1B (strain NCTC 13174 / 8081)).